The primary structure comprises 645 residues: Threonine--tRNA ligase (645 aa).

The TGS domain occupies 1–61 (MIKITLPDGS…TSDSTVQLLT (61 aa)). A catalytic region spans residues 242 to 541 (DHRKLGKELE…LIEHVAGNFP (300 aa)). Positions 337, 388, and 518 each coordinate Zn(2+).

The protein belongs to the class-II aminoacyl-tRNA synthetase family. As to quaternary structure, homodimer. The cofactor is Zn(2+).

The protein localises to the cytoplasm. It carries out the reaction tRNA(Thr) + L-threonine + ATP = L-threonyl-tRNA(Thr) + AMP + diphosphate + H(+). Catalyzes the attachment of threonine to tRNA(Thr) in a two-step reaction: L-threonine is first activated by ATP to form Thr-AMP and then transferred to the acceptor end of tRNA(Thr). Also edits incorrectly charged L-seryl-tRNA(Thr). The polypeptide is Threonine--tRNA ligase (Cytophaga hutchinsonii (strain ATCC 33406 / DSM 1761 / CIP 103989 / NBRC 15051 / NCIMB 9469 / D465)).